The following is a 175-amino-acid chain: Inorganic pyrophosphatase (175 aa).

Substrate contacts are provided by Lys30, Arg44, and Tyr56. Residues Asp66, Asp71, and Asp103 each coordinate Mg(2+). Tyr142 contributes to the substrate binding site.

It belongs to the PPase family. In terms of assembly, homohexamer. Requires Mg(2+) as cofactor.

It localises to the cytoplasm. The catalysed reaction is diphosphate + H2O = 2 phosphate + H(+). Functionally, catalyzes the hydrolysis of inorganic pyrophosphate (PPi) forming two phosphate ions. This chain is Inorganic pyrophosphatase, found in Buchnera aphidicola subsp. Baizongia pistaciae (strain Bp).